The primary structure comprises 319 residues: uncharacterized protein (319 aa).

The 136-residue stretch at 29–164 (VNISSLALLK…LDAFRSVNPL (136 aa)) folds into the MPN domain. Zn(2+)-binding residues include His111, His113, and Asp124. A JAMM motif motif is present at residues 111 to 124 (HSHPGFGCWLSSVD).

This sequence belongs to the peptidase M67A family.

This is an uncharacterized protein from Caenorhabditis elegans.